The chain runs to 468 residues: UDP-N-acetylmuramate--L-alanine ligase (468 aa).

ATP is bound at residue 112 to 118 (GMHGKTT).

This sequence belongs to the MurCDEF family.

It localises to the cytoplasm. It catalyses the reaction UDP-N-acetyl-alpha-D-muramate + L-alanine + ATP = UDP-N-acetyl-alpha-D-muramoyl-L-alanine + ADP + phosphate + H(+). The protein operates within cell wall biogenesis; peptidoglycan biosynthesis. Its function is as follows. Cell wall formation. The polypeptide is UDP-N-acetylmuramate--L-alanine ligase (Koribacter versatilis (strain Ellin345)).